The chain runs to 481 residues: Glutamate--tRNA ligase 2 (481 aa).

The 'HIGH' region signature appears at 17–27 (PSPTGFLHIGG). Residues 118–139 (AEQRAKKQPQRYDGRWRDRDPS) are compositionally biased toward basic and acidic residues. A disordered region spans residues 118-143 (AEQRAKKQPQRYDGRWRDRDPSEAPA). The 'KMSKS' region signature appears at 246-250 (KLSKR). Lysine 249 lines the ATP pocket.

The protein belongs to the class-I aminoacyl-tRNA synthetase family. Glutamate--tRNA ligase type 1 subfamily. Monomer.

Its subcellular location is the cytoplasm. It carries out the reaction tRNA(Glu) + L-glutamate + ATP = L-glutamyl-tRNA(Glu) + AMP + diphosphate. In terms of biological role, catalyzes the attachment of glutamate to tRNA(Glu) in a two-step reaction: glutamate is first activated by ATP to form Glu-AMP and then transferred to the acceptor end of tRNA(Glu). The sequence is that of Glutamate--tRNA ligase 2 from Zymomonas mobilis subsp. mobilis (strain ATCC 31821 / ZM4 / CP4).